The sequence spans 122 residues: Large ribosomal subunit protein uL14 (122 aa).

Belongs to the universal ribosomal protein uL14 family. As to quaternary structure, part of the 50S ribosomal subunit. Forms a cluster with proteins L3 and L19. In the 70S ribosome, L14 and L19 interact and together make contacts with the 16S rRNA in bridges B5 and B8.

Functionally, binds to 23S rRNA. Forms part of two intersubunit bridges in the 70S ribosome. This is Large ribosomal subunit protein uL14 from Nitrosococcus oceani (strain ATCC 19707 / BCRC 17464 / JCM 30415 / NCIMB 11848 / C-107).